Here is a 430-residue protein sequence, read N- to C-terminus: UDP-N-acetylmuramoylalanine--D-glutamate ligase (430 aa).

ATP is bound at residue 109-115 (GTDGKST).

It belongs to the MurCDEF family.

It is found in the cytoplasm. It carries out the reaction UDP-N-acetyl-alpha-D-muramoyl-L-alanine + D-glutamate + ATP = UDP-N-acetyl-alpha-D-muramoyl-L-alanyl-D-glutamate + ADP + phosphate + H(+). It functions in the pathway cell wall biogenesis; peptidoglycan biosynthesis. Functionally, cell wall formation. Catalyzes the addition of glutamate to the nucleotide precursor UDP-N-acetylmuramoyl-L-alanine (UMA). The polypeptide is UDP-N-acetylmuramoylalanine--D-glutamate ligase (Thermotoga sp. (strain RQ2)).